The primary structure comprises 1441 residues: ABC transporter G family member 41 (1441 aa).

A compositionally biased stretch (basic and acidic residues) spans Met-1–Glu-14. The disordered stretch occupies residues Met-1 to Leu-28. One can recognise an ABC transporter 1 domain in the interval Ala-159–Glu-432. Position 192-199 (Gly-192–Thr-199) interacts with ATP. In terms of domain architecture, ABC transmembrane type-2 1 spans Asp-510 to Phe-722. Helical transmembrane passes span Phe-528 to Phe-548, Ser-566 to Val-586, Phe-600 to Val-620, Phe-642 to Cys-662, Ala-672 to Ile-692, and Ala-758 to Ile-778. The 253-residue stretch at Ile-838–Pro-1090 folds into the ABC transporter 2 domain. Gly-883–Thr-890 lines the ATP pocket. An ABC transmembrane type-2 2 domain is found at Glu-1163–Phe-1379. Helical transmembrane passes span Ile-1187–Ile-1207, Gly-1215–Cys-1235, Ile-1272–Tyr-1292, Phe-1300–Ile-1320, Val-1329–Val-1349, Trp-1357–Thr-1377, and Leu-1413–Ile-1433.

This sequence belongs to the ABC transporter superfamily. ABCG family. PDR (TC 3.A.1.205) subfamily.

It is found in the membrane. May be a general defense protein. This chain is ABC transporter G family member 41, found in Oryza sativa subsp. japonica (Rice).